The sequence spans 307 residues: Glycine--tRNA ligase alpha subunit (307 aa).

It belongs to the class-II aminoacyl-tRNA synthetase family. Tetramer of two alpha and two beta subunits.

It localises to the cytoplasm. It carries out the reaction tRNA(Gly) + glycine + ATP = glycyl-tRNA(Gly) + AMP + diphosphate. This Xylella fastidiosa (strain M23) protein is Glycine--tRNA ligase alpha subunit.